We begin with the raw amino-acid sequence, 365 residues long: Chorismate synthase (365 aa).

R48 is a binding site for NADP(+). Residues 125–127 (RGS), G286, 301–305 (KPTPS), and R328 contribute to the FMN site.

Belongs to the chorismate synthase family. FMNH2 serves as cofactor.

It catalyses the reaction 5-O-(1-carboxyvinyl)-3-phosphoshikimate = chorismate + phosphate. Its pathway is metabolic intermediate biosynthesis; chorismate biosynthesis; chorismate from D-erythrose 4-phosphate and phosphoenolpyruvate: step 7/7. Functionally, catalyzes the anti-1,4-elimination of the C-3 phosphate and the C-6 proR hydrogen from 5-enolpyruvylshikimate-3-phosphate (EPSP) to yield chorismate, which is the branch point compound that serves as the starting substrate for the three terminal pathways of aromatic amino acid biosynthesis. This reaction introduces a second double bond into the aromatic ring system. This Methanosphaera stadtmanae (strain ATCC 43021 / DSM 3091 / JCM 11832 / MCB-3) protein is Chorismate synthase.